Here is a 397-residue protein sequence, read N- to C-terminus: S-adenosylmethionine synthase (397 aa).

ATP is bound at residue H15. D17 contributes to the Mg(2+) binding site. E43 is a binding site for K(+). The L-methionine site is built by E56 and Q99. Positions 99-109 (QSPDIAMGVNK) are flexible loop. Residues 175-177 (DGK), 241-242 (RF), D250, 256-257 (RK), A273, and K277 each bind ATP. D250 contributes to the L-methionine binding site. K281 is a binding site for L-methionine.

This sequence belongs to the AdoMet synthase family. In terms of assembly, homotetramer; dimer of dimers. Mg(2+) serves as cofactor. It depends on K(+) as a cofactor.

The protein localises to the cytoplasm. It catalyses the reaction L-methionine + ATP + H2O = S-adenosyl-L-methionine + phosphate + diphosphate. It participates in amino-acid biosynthesis; S-adenosyl-L-methionine biosynthesis; S-adenosyl-L-methionine from L-methionine: step 1/1. Its function is as follows. Catalyzes the formation of S-adenosylmethionine (AdoMet) from methionine and ATP. The overall synthetic reaction is composed of two sequential steps, AdoMet formation and the subsequent tripolyphosphate hydrolysis which occurs prior to release of AdoMet from the enzyme. This is S-adenosylmethionine synthase from Acetivibrio thermocellus (strain ATCC 27405 / DSM 1237 / JCM 9322 / NBRC 103400 / NCIMB 10682 / NRRL B-4536 / VPI 7372) (Clostridium thermocellum).